Consider the following 696-residue polypeptide: Macrolide export ATP-binding/permease protein MacB (696 aa).

Residues 6–244 (IELKNIERYH…KPQNKRTFID (239 aa)) form the ABC transporter domain. 42–49 (GASGSGKS) lines the ATP pocket. Positions 254–287 (HNTEKLNRPNEKNNIDNDNKENNNGYNRNDNSFL) are disordered. The segment covering 255 to 274 (NTEKLNRPNEKNNIDNDNKE) has biased composition (basic and acidic residues). The span at 275–284 (NNNGYNRNDN) shows a compositional bias: low complexity. 4 helical membrane passes run 324–344 (FLTM…IALG), 576–596 (IAFI…LVSV), 626–646 (MVSL…GGLF), and 659–679 (LSSF…FGYF).

Belongs to the ABC transporter superfamily. Macrolide exporter (TC 3.A.1.122) family. Homodimer. Part of the tripartite efflux system MacAB-TolC, which is composed of an inner membrane transporter, MacB, a periplasmic membrane fusion protein, MacA, and an outer membrane component, TolC. The complex forms a large protein conduit and can translocate molecules across both the inner and outer membranes. Interacts with MacA.

It localises to the cell inner membrane. In terms of biological role, part of the tripartite efflux system MacAB-TolC. MacB is a non-canonical ABC transporter that contains transmembrane domains (TMD), which form a pore in the inner membrane, and an ATP-binding domain (NBD), which is responsible for energy generation. Confers resistance against macrolides. The sequence is that of Macrolide export ATP-binding/permease protein MacB from Haemophilus ducreyi (strain 35000HP / ATCC 700724).